The following is a 328-amino-acid chain: Thiamine-monophosphate kinase (328 aa).

Residues Asp-30, Thr-45, Thr-46, and Asp-47 each coordinate Mg(2+). His-54 lines the substrate pocket. The Mg(2+) site is built by Asp-75 and Asp-122. Residues Gly-121–Asp-122 and Arg-146 each bind ATP. Position 211 (Asp-211) interacts with Mg(2+). Ser-213 contacts ATP. Asp-214 is a binding site for Mg(2+). Glu-262 and Phe-321 together coordinate substrate.

It belongs to the thiamine-monophosphate kinase family.

It catalyses the reaction thiamine phosphate + ATP = thiamine diphosphate + ADP. It participates in cofactor biosynthesis; thiamine diphosphate biosynthesis; thiamine diphosphate from thiamine phosphate: step 1/1. In terms of biological role, catalyzes the ATP-dependent phosphorylation of thiamine-monophosphate (TMP) to form thiamine-pyrophosphate (TPP), the active form of vitamin B1. In Haemophilus influenzae (strain ATCC 51907 / DSM 11121 / KW20 / Rd), this protein is Thiamine-monophosphate kinase.